Consider the following 360-residue polypeptide: Peptide chain release factor 1 (360 aa).

Position 235 is an N5-methylglutamine (Gln235). Residues 284 to 295 (ERQEQAQADTRR) show a composition bias toward basic and acidic residues. The tract at residues 284 to 309 (ERQEQAQADTRRNLLGSGDRSDKIRT) is disordered.

It belongs to the prokaryotic/mitochondrial release factor family. Methylated by PrmC. Methylation increases the termination efficiency of RF1.

It localises to the cytoplasm. Peptide chain release factor 1 directs the termination of translation in response to the peptide chain termination codons UAG and UAA. This Pasteurella multocida (strain Pm70) protein is Peptide chain release factor 1 (prfA).